The chain runs to 186 residues: Tegument protein UL55 (186 aa).

The protein belongs to the alphaherpesvirinae HHV-1 UL55 family.

The protein resides in the virion tegument. It is found in the host nucleus matrix. In Human herpesvirus 2 (strain HG52) (HHV-2), this protein is Tegument protein UL55.